Reading from the N-terminus, the 879-residue chain is Alanine--tRNA ligase (879 aa).

Zn(2+) is bound by residues histidine 570, histidine 574, cysteine 672, and histidine 676.

The protein belongs to the class-II aminoacyl-tRNA synthetase family. It depends on Zn(2+) as a cofactor.

The protein localises to the cytoplasm. It carries out the reaction tRNA(Ala) + L-alanine + ATP = L-alanyl-tRNA(Ala) + AMP + diphosphate. In terms of biological role, catalyzes the attachment of alanine to tRNA(Ala) in a two-step reaction: alanine is first activated by ATP to form Ala-AMP and then transferred to the acceptor end of tRNA(Ala). Also edits incorrectly charged Ser-tRNA(Ala) and Gly-tRNA(Ala) via its editing domain. This chain is Alanine--tRNA ligase, found in Nitratidesulfovibrio vulgaris (strain ATCC 29579 / DSM 644 / CCUG 34227 / NCIMB 8303 / VKM B-1760 / Hildenborough) (Desulfovibrio vulgaris).